We begin with the raw amino-acid sequence, 273 residues long: Dermonecrotic toxin LapSicTox-alphaIB1aiv (273 aa).

The active site involves H5. Mg(2+)-binding residues include E25 and D27. The Nucleophile role is filled by H41. 2 disulfides stabilise this stretch: C45–C51 and C47–C190. D85 lines the Mg(2+) pocket. A glycan (N-linked (GlcNAc...) asparagine) is linked at N250.

The protein belongs to the arthropod phospholipase D family. Class II subfamily. Mg(2+) serves as cofactor. In terms of tissue distribution, expressed by the venom gland.

It localises to the secreted. The enzyme catalyses an N-(acyl)-sphingosylphosphocholine = an N-(acyl)-sphingosyl-1,3-cyclic phosphate + choline. It carries out the reaction an N-(acyl)-sphingosylphosphoethanolamine = an N-(acyl)-sphingosyl-1,3-cyclic phosphate + ethanolamine. It catalyses the reaction a 1-acyl-sn-glycero-3-phosphocholine = a 1-acyl-sn-glycero-2,3-cyclic phosphate + choline. The catalysed reaction is a 1-acyl-sn-glycero-3-phosphoethanolamine = a 1-acyl-sn-glycero-2,3-cyclic phosphate + ethanolamine. Dermonecrotic toxins cleave the phosphodiester linkage between the phosphate and headgroup of certain phospholipids (sphingolipid and lysolipid substrates), forming an alcohol (often choline) and a cyclic phosphate. This toxin acts on sphingomyelin (SM). It may also act on ceramide phosphoethanolamine (CPE), lysophosphatidylcholine (LPC) and lysophosphatidylethanolamine (LPE), but not on lysophosphatidylserine (LPS), and lysophosphatidylglycerol (LPG). It acts by transphosphatidylation, releasing exclusively cyclic phosphate products as second products. Induces dermonecrosis, hemolysis, increased vascular permeability, edema, inflammatory response, and platelet aggregation. The polypeptide is Dermonecrotic toxin LapSicTox-alphaIB1aiv (Loxosceles apachea (Apache recluse spider)).